We begin with the raw amino-acid sequence, 480 residues long: ATP synthase subunit beta (480 aa).

An ATP-binding site is contributed by glycine 152 to threonine 159.

The protein belongs to the ATPase alpha/beta chains family. As to quaternary structure, F-type ATPases have 2 components, CF(1) - the catalytic core - and CF(0) - the membrane proton channel. CF(1) has five subunits: alpha(3), beta(3), gamma(1), delta(1), epsilon(1). CF(0) has three main subunits: a(1), b(2) and c(9-12). The alpha and beta chains form an alternating ring which encloses part of the gamma chain. CF(1) is attached to CF(0) by a central stalk formed by the gamma and epsilon chains, while a peripheral stalk is formed by the delta and b chains.

Its subcellular location is the cell membrane. The catalysed reaction is ATP + H2O + 4 H(+)(in) = ADP + phosphate + 5 H(+)(out). Functionally, produces ATP from ADP in the presence of a proton gradient across the membrane. The catalytic sites are hosted primarily by the beta subunits. The chain is ATP synthase subunit beta from Wolbachia sp. subsp. Brugia malayi (strain TRS).